Consider the following 333-residue polypeptide: Cap-specific mRNA (nucleoside-2'-O-)-methyltransferase (333 aa).

Tyr22 contributes to the mRNA binding site. S-adenosyl-L-methionine-binding residues include Gln39, Tyr66, Gly68, Gly72, Asp95, Arg97, Val116, and Asp138. The segment at Pro169–Val249 is binding to NPH-I. The tract at residues Pro169–Lys333 is binding to Rap94. Residue Lys175 is the For methyltransferase activity of the active site. MRNA-binding positions include Arg177–Phe180, Asp182, Ser205–Glu207, and Glu233. The tract at residues Ser305–Lys333 is disordered. Positions Arg311–Asn322 are enriched in low complexity. A compositionally biased stretch (basic residues) spans Arg323–Lys333.

Belongs to the class I-like SAM-binding methyltransferase superfamily. Poxvirus/kinetoplastid 2'-O-MTase family. In terms of assembly, interacts with poly(A) polymerase catalytic subunit OPG063. Interacts with OPG109 and OPG123; these interactions might help linking transcription to capping and polyadenylation.

The protein resides in the virion. It carries out the reaction a 5'-end (N(7)-methyl 5'-triphosphoguanosine)-ribonucleoside in mRNA + S-adenosyl-L-methionine = a 5'-end (N(7)-methyl 5'-triphosphoguanosine)-(2'-O-methyl-ribonucleoside) in mRNA + S-adenosyl-L-homocysteine + H(+). In terms of biological role, displays methyltransferase, positive regulation of the poly(A) polymerase and transcription elongation activities. Involved in the modification of both mRNA ends and in intermediate and late gene positive transcription elongation. At the mRNAs 5' end, methylates the ribose 2' OH group of the first transcribed nucleotide, thereby producing a 2'-O-methylpurine cap. At the 3' end, functions as a processivity factor which stimulates the activity of the viral poly(A) polymerase OPG063 that creates mRNA's poly(A) tail. In the presence of OPG102, OPG063 does not dissociate from the RNA allowing tail elongation to around 250 adenylates. This Vaccinia virus (strain Western Reserve) (VACV) protein is Cap-specific mRNA (nucleoside-2'-O-)-methyltransferase (OPG102).